We begin with the raw amino-acid sequence, 547 residues long: Cilia- and flagella- associated protein 210 (547 aa).

A coiled-coil region spans residues 184 to 254 (KLNVEKAFKE…EIEMKKKQGK (71 aa)). The tract at residues 210–237 (KDHLKQIKEHEEEEERRRKEEEKDAEEI) is disordered.

In terms of assembly, microtubule inner protein component of sperm flagellar doublet microtubules. As to expression, expressed in trachea multiciliated cells.

Its subcellular location is the cytoplasm. The protein localises to the cytoskeleton. It is found in the cilium axoneme. The protein resides in the flagellum axoneme. Functionally, microtubule inner protein (MIP) part of the dynein-decorated doublet microtubules (DMTs) in cilia axoneme, which is required for motile cilia beating. This chain is Cilia- and flagella- associated protein 210 (CFAP210), found in Bos taurus (Bovine).